The sequence spans 137 residues: Large ribosomal subunit protein eL28 (137 aa).

Ser-2 is subject to N-acetylserine. Residues Lys-58 and Lys-65 each participate in a glycyl lysine isopeptide (Lys-Gly) (interchain with G-Cter in SUMO2) cross-link. Position 115 is a phosphoserine (Ser-115).

Belongs to the eukaryotic ribosomal protein eL28 family. As to quaternary structure, component of the large ribosomal subunit.

The protein resides in the cytoplasm. Its function is as follows. Component of the large ribosomal subunit. The ribosome is a large ribonucleoprotein complex responsible for the synthesis of proteins in the cell. The polypeptide is Large ribosomal subunit protein eL28 (Rpl28) (Rattus norvegicus (Rat)).